Reading from the N-terminus, the 379-residue chain is MSEFLPFSRPAMGVEELAAVKEVLESGWITTGPKNHALEQAFCQLTGNQHAIAVSSATAGMHITLMALEIGKGDEVITPSLTWVSTLNMISLQGATPVMVDVDRDTLMVTPEAIESAITPRTKAIIPVHYAGAPADINAIRAIGERYGIAVIEDAAHAVGTYYKGRHIGAKGTAIFSFHAIKNITCAEGGLIVTDNENIARQLRMLKFHGLGVDAYDRQTWGRAPQAEVLTPGYKYNLTDINAAIALTQLAKLEHLNTRRREIAQQYQQALAALPFQPLSLPAWPHVHAWHLFIIRVDEQRCGISRDALMEALKERGIGTGLHFRAAHTQKYYRERFPSLSLPNTEWNSERICSLPLFPDMTTADADRVITALQQLAGQ.

An N6-(pyridoxal phosphate)lysine modification is found at lysine 182.

It belongs to the DegT/DnrJ/EryC1 family. ArnB subfamily. In terms of assembly, homodimer. Pyridoxal 5'-phosphate serves as cofactor.

It catalyses the reaction UDP-4-amino-4-deoxy-beta-L-arabinose + 2-oxoglutarate = UDP-beta-L-threo-pentopyranos-4-ulose + L-glutamate. It participates in nucleotide-sugar biosynthesis; UDP-4-deoxy-4-formamido-beta-L-arabinose biosynthesis; UDP-4-deoxy-4-formamido-beta-L-arabinose from UDP-alpha-D-glucuronate: step 2/3. It functions in the pathway bacterial outer membrane biogenesis; lipopolysaccharide biosynthesis. Catalyzes the conversion of UDP-4-keto-arabinose (UDP-Ara4O) to UDP-4-amino-4-deoxy-L-arabinose (UDP-L-Ara4N). The modified arabinose is attached to lipid A and is required for resistance to polymyxin and cationic antimicrobial peptides. This Escherichia coli O157:H7 protein is UDP-4-amino-4-deoxy-L-arabinose--oxoglutarate aminotransferase.